Consider the following 233-residue polypeptide: Coenzyme Q-binding protein COQ10 homolog, mitochondrial (233 aa).

The N-terminal 34 residues, 1-34 (MAEKATSLFLRAMEISEKQSFDVMRRNSSCTIRH), are a transit peptide targeting the mitochondrion.

It belongs to the COQ10 family. In terms of assembly, interacts with coenzyme Q.

The protein resides in the mitochondrion inner membrane. Required for the function of coenzyme Q in the respiratory chain. May serve as a chaperone or may be involved in the transport of Q6 from its site of synthesis to the catalytic sites of the respiratory complexes. In Danio rerio (Zebrafish), this protein is Coenzyme Q-binding protein COQ10 homolog, mitochondrial.